A 71-amino-acid polypeptide reads, in one-letter code: Large ribosomal subunit protein bL31 (71 aa).

Zn(2+) contacts are provided by Cys-16, Cys-18, Cys-38, and Cys-41.

The protein belongs to the bacterial ribosomal protein bL31 family. Type A subfamily. In terms of assembly, part of the 50S ribosomal subunit. It depends on Zn(2+) as a cofactor.

Functionally, binds the 23S rRNA. This is Large ribosomal subunit protein bL31 from Chromobacterium violaceum (strain ATCC 12472 / DSM 30191 / JCM 1249 / CCUG 213 / NBRC 12614 / NCIMB 9131 / NCTC 9757 / MK).